A 446-amino-acid polypeptide reads, in one-letter code: Exopolygalacturonase (446 aa).

The signal sequence occupies residues methionine 1–alanine 17. 4 N-linked (GlcNAc...) asparagine glycosylation sites follow: asparagine 53, asparagine 118, asparagine 134, and asparagine 204. One copy of the PbH1 1 repeat lies at serine 236 to proline 257. Aspartate 250 acts as the Proton donor in catalysis. A disulfide bridge links cysteine 252 with cysteine 269. 2 N-linked (GlcNAc...) asparagine glycosylation sites follow: asparagine 258 and asparagine 270. PbH1 repeat units lie at residues serine 259–serine 279, valine 290–valine 311, and valine 332–glutamine 353. Histidine 273 is an active-site residue. N-linked (GlcNAc...) asparagine glycosylation is found at asparagine 297, asparagine 302, asparagine 334, asparagine 359, and asparagine 369. 2 PbH1 repeats span residues proline 367–serine 398 and cysteine 403–valine 434. 2 disulfides stabilise this stretch: cysteine 397/cysteine 403 and cysteine 424/cysteine 436. Asparagine 435 carries N-linked (GlcNAc...) asparagine glycosylation.

The protein belongs to the glycosyl hydrolase 28 family.

It is found in the secreted. It catalyses the reaction [(1-&gt;4)-alpha-D-galacturonosyl](n) + H2O = alpha-D-galacturonate + [(1-&gt;4)-alpha-D-galacturonosyl](n-1). Hydrolysis of 1,4-alpha-D-galactosiduronic linkages in pectate and other galacturonans. The polypeptide is Exopolygalacturonase (PGX1) (Cochliobolus carbonum (Maize leaf spot fungus)).